A 272-amino-acid chain; its full sequence is Probable feruloyl esterase C (272 aa).

An N-terminal signal peptide occupies residues 1–22 (MLPTILYSAILALSALTPSALA).

Belongs to the faeC family.

Its subcellular location is the secreted. It catalyses the reaction feruloyl-polysaccharide + H2O = ferulate + polysaccharide.. Functionally, involved in degradation of plant cell walls. Hydrolyzes the feruloyl-arabinose ester bond in arabinoxylans, and the feruloyl-galactose ester bond in pectin. Active against paranitrophenyl-acetate, methyl ferulate and wheat arabinoxylan. The protein is Probable feruloyl esterase C (faeC-1) of Aspergillus clavatus (strain ATCC 1007 / CBS 513.65 / DSM 816 / NCTC 3887 / NRRL 1 / QM 1276 / 107).